Reading from the N-terminus, the 96-residue chain is MPGKIAVEVAYALPKKQYLQRVTLQEGATVEEAIRASGLLELRTDIDLTENKVGIYSRPAKLSDSVHDGDRVEIYRPLIADPKELRRQRAEKSANK.

This sequence belongs to the UPF0125 (RnfH) family.

In Escherichia coli O157:H7, this protein is UPF0125 protein YfjF (yfjF).